We begin with the raw amino-acid sequence, 611 residues long: Leucine aminopeptidase 2 (611 aa).

Residues 135–137 (QCQ) and 265–270 (PYGGME) contribute to the a peptide site. Histidine 294 serves as a coordination point for Zn(2+). Glutamate 295 functions as the Proton acceptor in the catalytic mechanism. Zn(2+)-binding residues include histidine 298 and glutamate 317. The Proton donor role is filled by tyrosine 383.

Belongs to the peptidase M1 family. It depends on Zn(2+) as a cofactor.

Its subcellular location is the cytoplasm. The protein localises to the nucleus. The enzyme catalyses an epoxide + H2O = an ethanediol. Functionally, aminopeptidase that preferentially cleaves di- and tripeptides. Also has low epoxide hydrolase activity (in vitro). Can hydrolyze the epoxide leukotriene LTA(4) but it forms preferentially 5,6-dihydroxy-7,9,11,14-eicosatetraenoic acid rather than the cytokine leukotriene B(4) as the product compared to the homologous mammalian enzyme (in vitro). This chain is Leucine aminopeptidase 2, found in Chaetomium globosum (strain ATCC 6205 / CBS 148.51 / DSM 1962 / NBRC 6347 / NRRL 1970) (Soil fungus).